Here is a 402-residue protein sequence, read N- to C-terminus: B3 domain-containing protein Os01g0723500 (402 aa).

The segment at residues 18-121 (RPHFFKVLVG…RFTAMVFDRT (104 aa)) is a DNA-binding region (TF-B3 1). The tract at residues 126-203 (EDLMGGGGGD…VKNEEDADEL (78 aa)) is disordered. Residues 152-162 (DAARPKKDSVG) are compositionally biased toward basic and acidic residues. Positions 173 to 186 (SGGQPLQIVDSSWT) are enriched in polar residues. The segment at residues 289-381 (CVIRMSTMHV…EFRVHIFRVV (93 aa)) is a DNA-binding region (TF-B3 2).

The protein localises to the nucleus. The protein is B3 domain-containing protein Os01g0723500 of Oryza sativa subsp. japonica (Rice).